Consider the following 339-residue polypeptide: Leucine-rich repeat-containing protein 59 (339 aa).

Over 1–282 the chain is Cytoplasmic; it reads MARGGGKSGS…KHSWSRSVLR (282 aa). LRR repeat units follow at residues 10–31, 40–61, 63–84, and 86–107; these read SLKD…SEVP, KATV…FCSL, HLVK…FGRL, and SLQH…FAQL. A coiled-coil region spans residues 181 to 254; sequence MKVIQSEQDR…EMEKKTKKET (74 aa). A disordered region spans residues 186 to 275; that stretch reads SEQDRERQRK…PPQPARHKHS (90 aa). The span at 187 to 256 shows a compositional bias: basic and acidic residues; sequence EQDRERQRKL…EKKTKKETVQ (70 aa). Residues 283–300 traverse the membrane as a helical segment; that stretch reads ALLLVLLCILCTLAVCKL. The Lumenal portion of the chain corresponds to 301-339; it reads TELQHQPLCVSVNTLYEDVVAAVQNHKTLQNMLQQNSQQ.

As to quaternary structure, interacts with SGO1.

The protein resides in the microsome membrane. It localises to the endoplasmic reticulum membrane. Its subcellular location is the nucleus envelope. Required for nuclear import of FGF1. The polypeptide is Leucine-rich repeat-containing protein 59 (LRRC59) (Gallus gallus (Chicken)).